The following is a 387-amino-acid chain: 3-ketoacyl-CoA thiolase (387 aa).

Catalysis depends on cysteine 91, which acts as the Acyl-thioester intermediate. Residues histidine 343 and cysteine 373 each act as proton acceptor in the active site.

This sequence belongs to the thiolase-like superfamily. Thiolase family. In terms of assembly, heterotetramer of two alpha chains (FadB) and two beta chains (FadA).

The protein localises to the cytoplasm. The catalysed reaction is an acyl-CoA + acetyl-CoA = a 3-oxoacyl-CoA + CoA. It participates in lipid metabolism; fatty acid beta-oxidation. Its function is as follows. Catalyzes the final step of fatty acid oxidation in which acetyl-CoA is released and the CoA ester of a fatty acid two carbons shorter is formed. The sequence is that of 3-ketoacyl-CoA thiolase from Yersinia enterocolitica serotype O:8 / biotype 1B (strain NCTC 13174 / 8081).